Here is a 468-residue protein sequence, read N- to C-terminus: Zinc finger CCCH domain-containing protein 32 (468 aa).

The tract at residues 1-25 is disordered; the sequence is MYARNPPLNGSQSAQAPDWTPADAD. 5 consecutive C3H1-type zinc fingers follow at residues 45 to 73, 90 to 118, 136 to 164, 289 to 317, and 335 to 363; these read RPGAPDCAYYMRTGVCGYGNRCRYNHPRD, RFGEPPCQFYLKTGTCKFGASCKFHHPKN, REGDNECSYYLKTGQCKFGITCKFHHPQP, RPGEPECQYYLKTGDCKFGTSCKFHHPRD, and RPGVQRCTFYVQNGFCKFGSTCKFDHPMG.

It is found in the nucleus. In Arabidopsis thaliana (Mouse-ear cress), this protein is Zinc finger CCCH domain-containing protein 32.